Reading from the N-terminus, the 1214-residue chain is [F-actin]-monooxygenase mical1 (1214 aa).

The segment at 1–488 (MVNPLDSVNP…KRLYEAEEQE (488 aa)) is monooxygenase domain. FAD contacts are provided by residues cysteine 96, 115-117 (EKR), 122-124 (RNN), phenylalanine 182, tyrosine 292, and aspartate 392. The segment at 484–505 (AEEQESKPNKLKKPDIKAKPRK) is disordered. In terms of domain architecture, Calponin-homology (CH) spans 508–614 (MKRLEELLSW…YLTQIRNALT (107 aa)). A disordered region spans residues 649 to 676 (HKDRLASVKGPRQQNMKEKEEKKDVKEE). A compositionally biased stretch (basic and acidic residues) spans 663 to 676 (NMKEKEEKKDVKEE). Residues 686 to 748 (EPCYFCKKHL…ELHSLAEEEE (63 aa)) form the LIM zinc-binding domain. Zn(2+) contacts are provided by cysteine 688, cysteine 691, histidine 709, cysteine 712, cysteine 715, cysteine 718, cysteine 738, and histidine 741. Residues 747 to 1019 (EEGDEGHGGA…DDEDEDEEDL (273 aa)) are disordered. A compositionally biased stretch (acidic residues) spans 796–815 (PDFDESTEFPAPDQDEPPDL). Positions 828–841 (SAENTNMENQQHNI) are enriched in polar residues. Low complexity predominate over residues 910-922 (RGSSSAASTSSSS). Polar residues predominate over residues 974–987 (SPWNLSSPRLQQRF). The segment covering 1003 to 1019 (VSEDDNEDDEDEDEEDL) has biased composition (acidic residues). The 147-residue stretch at 1053–1199 (KMTEIQRFHK…EVNDQFNSSL (147 aa)) folds into the bMERB domain. Residues 1061-1131 (HKAQSIQRRL…DLMVASRQLE (71 aa)) are a coiled coil. Positions 1194–1214 (QFNSSLDAKRRSTTASQVHWE) are disordered.

Belongs to the Mical family. FAD is required as a cofactor.

It localises to the cytoplasm. The protein localises to the cytoskeleton. The protein resides in the midbody. Its subcellular location is the endosome membrane. It catalyses the reaction L-methionyl-[F-actin] + NADPH + O2 + H(+) = L-methionyl-(R)-S-oxide-[F-actin] + NADP(+) + H2O. It carries out the reaction NADPH + O2 + H(+) = H2O2 + NADP(+). Its function is as follows. Monooxygenase that promotes depolymerization of F-actin by mediating oxidation of specific methionine residues on actin to form methionine-sulfoxide, resulting in actin filament disassembly and prevent repolymerization. May be involved in endosomal tubule extension and neosynthesized protein export. The protein is [F-actin]-monooxygenase mical1 (mical1) of Danio rerio (Zebrafish).